The sequence spans 151 residues: US8.5 protein (151 aa).

A disordered region spans residues 27-107; the sequence is SSQPLDPEGP…APSPHPRPPG (81 aa). Over residues 80 to 91 the composition is skewed to basic and acidic residues; the sequence is SDERGPPRHDRP.

The protein resides in the host nucleus. It localises to the host nucleolus. The protein is US8.5 protein (US8.5) of Human herpesvirus 1 (strain F) (HHV-1).